The primary structure comprises 1163 residues: NACHT, LRR and PYD domains-containing protein 5 (1163 aa).

Basic and acidic residues-rich tracts occupy residues 1–42 (MGPP…KDQG), 56–94 (PEKE…KDQG), and 108–127 (PEKD…EQKS). The tract at residues 1 to 201 (MGPPEKESKA…TEADKDNGGD (201 aa)) is disordered. The span at 128-137 (ESTMSPSENV) shows a compositional bias: polar residues. Residues 153-173 (ASERKMTSPENDSKSIQKDQG) are compositionally biased toward basic and acidic residues. Residues 243–565 (HTIILHGRPG…AALYYVLEGL (323 aa)) form the NACHT domain. Residue 249–256 (GRPGVGKS) participates in ATP binding. LRR repeat units follow at residues 801 to 822 (NLKY…LACE), 830 to 851 (SVET…MIST), 858 to 878 (RLKC…ISLG), 887 to 906 (LLQK…CHLL), 915 to 935 (NLTH…QQLC), 944 to 964 (ALQR…GFLA), 972 to 993 (KLTH…LLCE), 1001 to 1022 (YLQE…DLAC), 1029 to 1050 (HLKS…TLCE), 1058 to 1079 (SLRR…ALSL), and 1086 to 1107 (HLNS…KLCS).

Belongs to the NLRP family. Component of the subcortical maternal complex (SCMC), at least composed of NLRP5, KHDC3, OOEP, and TLE6. Within the complex, interacts with OOEP, KHDC3 and TLE6. The SCMC may facilitate translocation of its components between the nuclear and cytoplasmic compartments. As part of the SCMC interacts with the SCMC-associated protein ZBED3. As part of the SCMC interacts with the SCMC-associated protein CFL1/Cofilin-1. Interacts with PRKCE. Interacts with TUBB3 at cytoskeleton microtubules. Post-translationally, phosphorylated by PRKCE.

Its subcellular location is the cytoplasm. It localises to the cytoplasmic vesicle. The protein localises to the secretory vesicle. The protein resides in the cortical granule. It is found in the mitochondrion. Its subcellular location is the nucleus. It localises to the nucleolus. The protein localises to the golgi apparatus. Component of the subcortical maternal complex (SCMC), a multiprotein complex that plays a key role in early embryonic development. The SCMC complex is a structural constituent of cytoplasmic lattices, which consist in fibrous structures found in the cytoplasm of oocytes and preimplantation embryos. They are required to store maternal proteins critical for embryonic development, such as proteins that control epigenetic reprogramming of the preimplantation embryo, and prevent their degradation or activation. Required for the localization of cortical granules to the cortex of oocytes, via association with the cortical actin scaffold. Required for cortical actin clearance prior to oocyte exocytosis and prevention of polyspermy. Involved in regulating post-fertilization Ca(2+) release and endoplasmic reticulum storage (ER) storage via regulation of cellular localization. May be involved in the localization of mitochondria to the cytoplasm and perinuclear region in oocytes and early stage embryos, independent of its role in CPL formation. The chain is NACHT, LRR and PYD domains-containing protein 5 from Mus musculus (Mouse).